A 68-amino-acid polypeptide reads, in one-letter code: Medusin-AS (68 aa).

A signal peptide spans 1 to 22; the sequence is MAFLKKSLFLVLFLGLVSLSVC. Positions 23–49 are excised as a propeptide; that stretch reads EEEKRESEEEKNEQEEDDRDERSEEKR. The segment at 24 to 46 is disordered; that stretch reads EEKRESEEEKNEQEEDDRDERSE. Residues 31-41 show a composition bias toward acidic residues; sequence EEKNEQEEDDR. Position 67 is a leucine amide (L67).

This sequence belongs to the frog skin active peptide (FSAP) family. Medusin subfamily. Expressed by the skin glands.

The protein localises to the secreted. Antimicrobial peptide active against Gram-positive bacteria and fungi but inactive against Gram-negative bacteria. Also inhibits growth of B.dendrobatidis zoospores at high concentrations. Shows anticancer activities. Shows hemolytic activity. The sequence is that of Medusin-AS from Agalychnis spurrelli (Gliding leaf frog).